The following is a 227-amino-acid chain: PKHD-type hydroxylase Swit_4046 (227 aa).

Residues 78–178 (KVFPPLFNLY…RLCSFFWIQS (101 aa)) form the Fe2OG dioxygenase domain. The Fe cation site is built by histidine 96, aspartate 98, and histidine 159. 2-oxoglutarate is bound at residue arginine 169.

Requires Fe(2+) as cofactor. L-ascorbate is required as a cofactor.

The chain is PKHD-type hydroxylase Swit_4046 from Rhizorhabdus wittichii (strain DSM 6014 / CCUG 31198 / JCM 15750 / NBRC 105917 / EY 4224 / RW1) (Sphingomonas wittichii).